Consider the following 447-residue polypeptide: UPF0210 protein Lreu_0940 (447 aa).

This sequence belongs to the UPF0210 family. Homodimer.

In Limosilactobacillus reuteri (strain DSM 20016) (Lactobacillus reuteri), this protein is UPF0210 protein Lreu_0940.